Reading from the N-terminus, the 245-residue chain is uncharacterized protein (245 aa).

This is an uncharacterized protein from Bacillus subtilis (strain 168).